The chain runs to 268 residues: Taurine import ATP-binding protein TauB (268 aa).

The 233-residue stretch at 4-236 (LSINNLSMRF…LGVDSDLREV (233 aa)) folds into the ABC transporter domain. ATP is bound at residue 41–48 (GPSGCGKT).

It belongs to the ABC transporter superfamily. Taurine importer (TC 3.A.1.17.1) family. In terms of assembly, the complex is composed of two ATP-binding proteins (TauB), two transmembrane proteins (TauC) and a solute-binding protein (TauA).

Its subcellular location is the cell inner membrane. The catalysed reaction is taurine(out) + ATP + H2O = taurine(in) + ADP + phosphate + H(+). Part of the ABC transporter complex TauABC involved in taurine import. Responsible for energy coupling to the transport system. The polypeptide is Taurine import ATP-binding protein TauB (Roseobacter denitrificans (strain ATCC 33942 / OCh 114) (Erythrobacter sp. (strain OCh 114))).